The sequence spans 205 residues: Holliday junction branch migration complex subunit RuvA (205 aa).

The tract at residues 1-64 (MIGRLRGLLV…EDAQLLYGFI (64 aa)) is domain I. Residues 65 to 143 (TKQERALFRL…SLMEASAGSE (79 aa)) are domain II. The interval 144 to 156 (REFMLKSNYTPAP) is flexible linker. Residues 157–205 (VINTAEEDAIAALLSLGYKPAQASKAVSAVYQDGMDSETLIKSSLKSML) form a domain III region.

Belongs to the RuvA family. In terms of assembly, homotetramer. Forms an RuvA(8)-RuvB(12)-Holliday junction (HJ) complex. HJ DNA is sandwiched between 2 RuvA tetramers; dsDNA enters through RuvA and exits via RuvB. An RuvB hexamer assembles on each DNA strand where it exits the tetramer. Each RuvB hexamer is contacted by two RuvA subunits (via domain III) on 2 adjacent RuvB subunits; this complex drives branch migration. In the full resolvosome a probable DNA-RuvA(4)-RuvB(12)-RuvC(2) complex forms which resolves the HJ.

The protein resides in the cytoplasm. Its function is as follows. The RuvA-RuvB-RuvC complex processes Holliday junction (HJ) DNA during genetic recombination and DNA repair, while the RuvA-RuvB complex plays an important role in the rescue of blocked DNA replication forks via replication fork reversal (RFR). RuvA specifically binds to HJ cruciform DNA, conferring on it an open structure. The RuvB hexamer acts as an ATP-dependent pump, pulling dsDNA into and through the RuvAB complex. HJ branch migration allows RuvC to scan DNA until it finds its consensus sequence, where it cleaves and resolves the cruciform DNA. This chain is Holliday junction branch migration complex subunit RuvA, found in Shewanella sediminis (strain HAW-EB3).